Consider the following 502-residue polypeptide: 2-isopropylmalate synthase (502 aa).

Asp1, His189, His191, and Asn225 together coordinate Mn(2+). The Pyruvate carboxyltransferase domain maps to 1 to 254; sequence DGEQALQASL…STNINYKEIY (254 aa). The segment at 379–502 is regulatory domain; the sequence is CLKFFSVQSI…VNKKLQELKK (124 aa).

It belongs to the alpha-IPM synthase/homocitrate synthase family. LeuA type 1 subfamily. As to quaternary structure, homodimer. The cofactor is Mn(2+).

Its subcellular location is the cytoplasm. It carries out the reaction 3-methyl-2-oxobutanoate + acetyl-CoA + H2O = (2S)-2-isopropylmalate + CoA + H(+). Its pathway is amino-acid biosynthesis; L-leucine biosynthesis; L-leucine from 3-methyl-2-oxobutanoate: step 1/4. In terms of biological role, catalyzes the condensation of the acetyl group of acetyl-CoA with 3-methyl-2-oxobutanoate (2-ketoisovalerate) to form 3-carboxy-3-hydroxy-4-methylpentanoate (2-isopropylmalate). This is 2-isopropylmalate synthase from Buchnera aphidicola subsp. Macrosiphoniella ludovicianae.